A 707-amino-acid chain; its full sequence is Serine/threonine protein kinase UL97 (707 aa).

The span at 1-14 (MSSALRSRARSASL) shows a compositional bias: low complexity. 4 disordered regions span residues 1 to 32 (MSSALRSRARSASLGTTTQGWDPPPLRRPSRA), 113 to 147 (DGEKEDAASDKENQRRPVVPSTSSRGSAASGDGYH), 176 to 199 (FTGGSDPSDSVSGVRGGRKRPLRP), and 231 to 264 (ESQDSAVASGPGRVPQPLSGSSGEESATAVEADS). Residues 113–127 (DGEKEDAASDKENQR) show a composition bias toward basic and acidic residues. Residues 178–188 (GGSDPSDSVSG) show a composition bias toward low complexity. Asp-456 acts as the Proton acceptor in catalysis.

It belongs to the protein kinase superfamily. Tyr protein kinase family. HCMV ganciclovir subfamily. In terms of assembly, interacts with UL83. Autophosphorylates on serine and threonine residues.

Its subcellular location is the virion. The catalysed reaction is L-seryl-[protein] + ATP = O-phospho-L-seryl-[protein] + ADP + H(+). It carries out the reaction L-threonyl-[protein] + ATP = O-phospho-L-threonyl-[protein] + ADP + H(+). Functionally, serine/threonine protein kinase that plays important roles in several processes including nuclear viral egress, viral replication or regulation of host cell cycle progression. Participates in the acquisition of tegument during virion morphogenesis in the nucleus. Redistributes the host nuclear lamina by phosphorylating cellular Lamins-A/C. Plays a role in viral DNA synthesis by phosphorylating the DNA polymerase processivity factor UL44. Stimulates host cell cycle to support viral DNA synthesis by phosphorylating host retinoblastoma/RB1 protein. Additional substrates have been identified including host EF1D or H2B. Also phosphorylates host SAMHD1 and thereby counteracts its antiviral effect by reducing its dNTP hydrolase activity. The polypeptide is Serine/threonine protein kinase UL97 (UL97) (Homo sapiens (Human)).